Here is a 263-residue protein sequence, read N- to C-terminus: Hydroxyethylthiazole kinase 1 (263 aa).

Residue Met-42 coordinates substrate. Lys-118 and Thr-164 together coordinate ATP. A substrate-binding site is contributed by Gly-191.

Belongs to the Thz kinase family. Mg(2+) is required as a cofactor.

The catalysed reaction is 5-(2-hydroxyethyl)-4-methylthiazole + ATP = 4-methyl-5-(2-phosphooxyethyl)-thiazole + ADP + H(+). The protein operates within cofactor biosynthesis; thiamine diphosphate biosynthesis; 4-methyl-5-(2-phosphoethyl)-thiazole from 5-(2-hydroxyethyl)-4-methylthiazole: step 1/1. Its function is as follows. Catalyzes the phosphorylation of the hydroxyl group of 4-methyl-5-beta-hydroxyethylthiazole (THZ). The polypeptide is Hydroxyethylthiazole kinase 1 (Clostridium botulinum (strain Kyoto / Type A2)).